Reading from the N-terminus, the 365-residue chain is 1-aminocyclopropane-1-carboxylate oxidase homolog 9 (365 aa).

A Fe2OG dioxygenase domain is found at 214–313 (KGLLMLCHYY…RISVACFVSS (100 aa)). Fe cation-binding residues include histidine 238, aspartate 240, and histidine 294. Arginine 304 is a 2-oxoglutarate binding site.

The protein belongs to the iron/ascorbate-dependent oxidoreductase family. Fe(2+) is required as a cofactor.

The chain is 1-aminocyclopropane-1-carboxylate oxidase homolog 9 from Arabidopsis thaliana (Mouse-ear cress).